An 805-amino-acid polypeptide reads, in one-letter code: MNRYAVSSLVGQGSFGCVYKATRKDDSKVVAIKVISKRGRATKELKNLRRECDIQARLKHPHVIEMIESFESKTDLFVVTEFALMDLHRYLSYNGAMGEEPARRVTGHLVSALYYLHSNRILHRDLKPQNVLLDKNMHAKLCDFGLARNMTLGTHVLTSIKGTPLYMAPELLAEQPYDHHADMWSLGCIAYESMAGQPPFCASSILHLVKMIKHEDVKWPSTLTSECRSFLQGLLEKDPGLRISWTQLLCHPFVEGRIFIAETQAEAAKESPFTNPEAKVKSSKQSDPEVGDLDEALAALDFGESRQENLTTSRDSINAIAPSDVEHLETDVEDNMQRVVVPFADLSYRDLSGVRAMPMVHQPVINSHTCFVSGNSNMILNHMNDNFDFQASLRGGGVAAKPIVAPTVRQSRSKDLEKRKLSQNLDNFSVRLGHSVDHEAQRKATEIATQEKHNQENKPPAEAISYANSQPPQQQPQQLKHSMHSTNEEKLSSDNTPPCLLPGWDSCDESQSPPIENDEWLAFLNRSVQELLDGELDSLKQHNLVSIIVAPLRNSKAIPRVLKSVAQLLSLPFVLVDPVLIVDLELIRNVYVDVKLVPNLMYACKLLLSHKQLSDSAASAPLTTGSLSRTLRSIPELTVEELETACSLYELVCHLVHLQQQFLTQFCDAVAILAASDLFLNFLTHDFRQSDSDAASVRLAGCMLALMGCVLRELPENAELVERIVFNPRLNFVSLLQSRHHLLRQRSCQLLRLLARFSLRGVQRIWNGELRFALQQLSEHHSYPALRGEAAQTLDEISHFTFFVT.

The Protein kinase domain maps to Tyr-4–Val-254. ATP is bound by residues Val-10 to Val-18 and Lys-33. Asp-125 (proton acceptor) is an active-site residue. Residues Lys-269–Glu-289 form a disordered region. Over residues Ala-278–Asp-287 the composition is skewed to basic and acidic residues. A phosphoserine mark is found at Ser-422 and Ser-429. The span at Ile-447–Glu-456 shows a compositional bias: basic and acidic residues. A disordered region spans residues Ile-447–Thr-496.

This sequence belongs to the protein kinase superfamily. Ser/Thr protein kinase family. In terms of tissue distribution, expressed in all imaginal disks, higher level in wing disk.

The enzyme catalyses L-seryl-[protein] + ATP = O-phospho-L-seryl-[protein] + ADP + H(+). It carries out the reaction L-threonyl-[protein] + ATP = O-phospho-L-threonyl-[protein] + ADP + H(+). Functionally, probable serine/threonine-protein kinase; maternally required for correct patterning in the posterior part of each embryonic metamere. May be involved in control of cell division during metamorphosis and ovarian development. May interact with costal-2. The polypeptide is Serine/threonine-protein kinase fused (fu) (Drosophila melanogaster (Fruit fly)).